The primary structure comprises 71 residues: Large ribosomal subunit protein bL31 (71 aa).

The Zn(2+) site is built by C16, C18, C37, and C40.

This sequence belongs to the bacterial ribosomal protein bL31 family. Type A subfamily. As to quaternary structure, part of the 50S ribosomal subunit. Zn(2+) serves as cofactor.

In terms of biological role, binds the 23S rRNA. The protein is Large ribosomal subunit protein bL31 of Nitratidesulfovibrio vulgaris (strain DSM 19637 / Miyazaki F) (Desulfovibrio vulgaris).